Consider the following 347-residue polypeptide: S-adenosylmethionine:tRNA ribosyltransferase-isomerase (347 aa).

This sequence belongs to the QueA family. In terms of assembly, monomer.

The protein resides in the cytoplasm. It catalyses the reaction 7-aminomethyl-7-carbaguanosine(34) in tRNA + S-adenosyl-L-methionine = epoxyqueuosine(34) in tRNA + adenine + L-methionine + 2 H(+). Its pathway is tRNA modification; tRNA-queuosine biosynthesis. In terms of biological role, transfers and isomerizes the ribose moiety from AdoMet to the 7-aminomethyl group of 7-deazaguanine (preQ1-tRNA) to give epoxyqueuosine (oQ-tRNA). The protein is S-adenosylmethionine:tRNA ribosyltransferase-isomerase of Xylella fastidiosa (strain 9a5c).